The following is a 1226-amino-acid chain: DNA-directed RNA polymerase subunit beta (1226 aa).

This sequence belongs to the RNA polymerase beta chain family. The RNAP catalytic core consists of 2 alpha, 1 beta, 1 beta' and 1 omega subunit. When a sigma factor is associated with the core the holoenzyme is formed, which can initiate transcription.

It catalyses the reaction RNA(n) + a ribonucleoside 5'-triphosphate = RNA(n+1) + diphosphate. Its function is as follows. DNA-dependent RNA polymerase catalyzes the transcription of DNA into RNA using the four ribonucleoside triphosphates as substrates. The polypeptide is DNA-directed RNA polymerase subunit beta (Leptospira interrogans serogroup Icterohaemorrhagiae serovar Lai (strain 56601)).